A 314-amino-acid polypeptide reads, in one-letter code: N-myc-interactor (314 aa).

Residues 1 to 24 (MDADKDNIKQACDERSAEMDDMRG) form a disordered region. Residue serine 16 is modified to Phosphoserine. A coiled-coil region spans residues 31–65 (VHEIMSENKELDEEIKKLEAELQSDAREFQIKENV). NID domains follow at residues 104–193 (GQAL…GEVE) and 202–293 (RSAV…EVEV).

It belongs to the NMI family. Interacts with MYCN and MYC, as well as with other transcription factors with a Zip, HLH or a HLH-Zip motif. Interacts with all STAT proteins except STAT2. Interacts with IRF7, the interaction is direct and leads to the inhibition of IRF7-mediated type I IFN production. Interacts (via coiled-coil domain) with TRIM21 (via the SPRY domain); the interaction leads to 'Lys-63'-linked ubiquitination of NMI. Interacts with IFI35; the interaction is direct and is facilitated by TRIM21. Interacts with TLR4; the interaction is direct and leads to NF-kappa-B activation. May be ubiquitinated. In terms of tissue distribution, expressed in macrophages.

It is found in the cytoplasm. The protein localises to the nucleus. It localises to the secreted. Functionally, acts as a signaling pathway regulator involved in innate immune system response. In response to interleukin 2/IL2 and interferon IFN-gamma/IFNG, interacts with signal transducer and activator of transcription/STAT which activate the transcription of downstream genes involved in a multitude of signals for development and homeostasis. Enhances the recruitment of CBP/p300 coactivators to STAT1 and STAT5, resulting in increased STAT1- and STAT5-dependent transcription. In response to interferon IFN-alpha, associates in a complex with transcriptional regulator IFI35 to regulate immune response; the complex formation prevents proteasome-mediated degradation of IFI35. In complex with IFI35, negatively regulates nuclear factor NF-kappa-B signaling by inhibiting the nuclear translocation, activation and transcription of NF-kappa-B subunit p65/RELA, resulting in the inhibition of endothelial cell proliferation, migration and re-endothelialization of injured arteries. Negatively regulates virus-triggered type I interferon/IFN production by inducing proteosome-dependent degradation of IRF7, a transcriptional regulator of type I IFN, thereby interfering with cellular antiviral responses. Beside its role as an intracellular signaling pathway regulator, also functions extracellularly as damage-associated molecular patterns (DAMPs) to promote inflammation, when actively released by macrophage to the extracellular space during cell injury or pathogen invasion. Macrophage-secreted NMI activates NF-kappa-B signaling in adjacent macrophages through Toll-like receptor 4/TLR4 binding and activation, thereby inducing NF-kappa-B translocation from the cytoplasm into the nucleus which promotes the release of pro-inflammatory cytokines. The protein is N-myc-interactor of Mus musculus (Mouse).